Reading from the N-terminus, the 2598-residue chain is Partially reducing polyketide synthase men1 (2598 aa).

The Ketosynthase family 3 (KS3) domain maps to 7–435; the sequence is SQSIAIVGLS…GSNAHAILDD (429 aa). Catalysis depends on for beta-ketoacyl synthase activity residues Cys-181, His-316, and His-358. Residues 450–459 show a composition bias toward basic residues; it reads GKSHHHHHQH. Disordered regions lie at residues 450–490 and 537–557; these read GKSH…NGTT and AEKQQQQQQQQGGQGGADPEK. Positions 474 to 490 are enriched in low complexity; that stretch reads VNGTSEVNGTSGVNGTT. The Malonyl-CoA:ACP transacylase (MAT) domain maps to 611–915; it reads YVFTGQGAQW…RGPVTQILQS (305 aa). Residues 1008-1151 are N-terminal hotdog fold; the sequence is LGLIGAPMPN…GSVAVEFGAL (144 aa). A PKS/mFAS DH domain is found at 1008–1325; the sequence is LGLIGAPMPN…CVEMPSASGM (318 aa). The segment at 1009–1323 is dehydratase (DH) domain; the sequence is GLIGAPMPNF…LVCVEMPSAS (315 aa). A C-terminal hotdog fold region spans residues 1169 to 1325; sequence TISQEVDVFY…CVEMPSASGM (157 aa). The Enoyl reductase (ER) domain occupies 1886–2197; it reads GMLNTLCFEI…ARSRQDKIVI (312 aa). The 178-residue stretch at 2222 to 2399 folds into the Ketoreductase (KR) domain; the sequence is TYLIAGGLGG…AATIDLGIVK (178 aa). A Carrier domain is found at 2510-2587; sequence EAARLVSAAV…AFASDLAKKG (78 aa). Ser-2547 carries the post-translational modification O-(pantetheine 4'-phosphoryl)serine.

Pantetheine 4'-phosphate is required as a cofactor.

The protein operates within secondary metabolite biosynthesis. Partially reducing polyketide synthase; part of the gene cluster that mediates the biosynthesis of menisporopsin A, a bioactive macrocyclic polylactone. The biosynthesis of menisporopsin A is performed by a reducing (man1) and a non-reducing (men2) polyketide synthase that catalyze the formation of each menisporopsin A subunits, while the esterification and cyclolactonization activities are probably peformed by the unusual thioesterase domain of men2. First, a reduced diketide intermediate, 3-hydroxybutyryl-S-ACP is produced by men1 and transferred to men2; this is followed by a second reduced diketide which is further elongated using 3 units of malonyl-coA to form a reduced pentaketide. The cyclization of this intermediate by the PT domain forms the second subunit, 2,4-dihydroxy-6-(2-hydroxy-n-propyl)benzoyl-S-ACP. The TE domain of men2 then esterifies the secondary hydroxyl group on the side chain of the second subunit with the acyl-TE of the first subunit to form the first ester intermediate. This process occurs iteratively to form a linear tetraester intermediate. The final subunit is formed by a similar process, except that an extra malonyl-CoA is required in an additional elongation step to form a reduced hexaketide intermediate, and the carbonyl group next to the secondary hydroxyl group is reduced by a trans-acting ketoreductase. Again, the PT domain catalyzes cyclization to form the largest subunit, 2,4-dihydroxy-6-(2,4-dihydroxy-n-pentyl) benzoyl-S-ACP. Then the linear pentaester intermediate is formed. In this step, if the intermediate transfer rate is slow, intra- molecular cyclization involving the secondary hydroxyl group of the pentaester intermediate may occur to form menisporopsin B. Alternatively, transfer of the pentaester intermediate to the TE domain would allow cyclolactonization to be catalyzed by the TE to form menisporopsin A. This chain is Partially reducing polyketide synthase men1, found in Menisporopsis theobromae.